The primary structure comprises 111 residues: Cell division protein FtsL (111 aa).

Over 1 to 26 the chain is Cytoplasmic; sequence MAQARTEFSKVAAPRKLEEMYAQRGD. Residues 27 to 47 form a helical membrane-spanning segment; it reads LFPYLLAVLVLLTLVSVFHVW. Residues 48 to 111 lie on the Periplasmic side of the membrane; sequence SRVRVVDLNL…PTDQQVVVVK (64 aa). A coiled-coil region spans residues 51 to 85; it reads RVVDLNLEVAEVARQLKVAQEEQNRLKLEVASLKT.

Belongs to the FtsL family.

It localises to the cell inner membrane. In terms of biological role, essential cell division protein. The protein is Cell division protein FtsL of Geobacter sulfurreducens (strain ATCC 51573 / DSM 12127 / PCA).